A 393-amino-acid chain; its full sequence is Elongation factor Tu (393 aa).

Residues 10–203 (KPHVNIGTIG…AVDNYIPTPV (194 aa)) form the tr-type G domain. A G1 region spans residues 19 to 26 (GHVDHGKT). 19–26 (GHVDHGKT) provides a ligand contact to GTP. Threonine 26 contacts Mg(2+). The tract at residues 60–64 (GITIS) is G2. A G3 region spans residues 81-84 (DCPG). GTP is bound by residues 81 to 85 (DCPGH) and 136 to 139 (NKVD). The G4 stretch occupies residues 136-139 (NKVD). Residues 173–175 (SAL) form a G5 region.

It belongs to the TRAFAC class translation factor GTPase superfamily. Classic translation factor GTPase family. EF-Tu/EF-1A subfamily. Monomer.

It is found in the cytoplasm. It catalyses the reaction GTP + H2O = GDP + phosphate + H(+). Its function is as follows. GTP hydrolase that promotes the GTP-dependent binding of aminoacyl-tRNA to the A-site of ribosomes during protein biosynthesis. This Chloroherpeton thalassium (strain ATCC 35110 / GB-78) protein is Elongation factor Tu.